The chain runs to 512 residues: 2,3-bisphosphoglycerate-independent phosphoglycerate mutase (512 aa).

2 residues coordinate Mn(2+): aspartate 12 and serine 62. Serine 62 (phosphoserine intermediate) is an active-site residue. Residues histidine 123, 153 to 154 (RD), arginine 185, arginine 191, 260 to 263 (RPDR), and lysine 333 each bind substrate. The Mn(2+) site is built by aspartate 400, histidine 404, aspartate 441, histidine 442, and histidine 460.

It belongs to the BPG-independent phosphoglycerate mutase family. As to quaternary structure, monomer. It depends on Mn(2+) as a cofactor.

The enzyme catalyses (2R)-2-phosphoglycerate = (2R)-3-phosphoglycerate. Its pathway is carbohydrate degradation; glycolysis; pyruvate from D-glyceraldehyde 3-phosphate: step 3/5. Functionally, catalyzes the interconversion of 2-phosphoglycerate and 3-phosphoglycerate. This is 2,3-bisphosphoglycerate-independent phosphoglycerate mutase from Clostridium perfringens (strain 13 / Type A).